The primary structure comprises 212 residues: Redox-sensing transcriptional repressor Rex (212 aa).

Residues 17–56 (KYHRYLQELMENDIDRISSKELSEKIGFTASQIRQDLNCF) constitute a DNA-binding region (H-T-H motif). 91-96 (GAGNIG) is an NAD(+) binding site.

It belongs to the transcriptional regulatory Rex family. Homodimer.

Its subcellular location is the cytoplasm. In terms of biological role, modulates transcription in response to changes in cellular NADH/NAD(+) redox state. The sequence is that of Redox-sensing transcriptional repressor Rex from Clostridium perfringens (strain SM101 / Type A).